Here is a 493-residue protein sequence, read N- to C-terminus: Glutamate--tRNA ligase (493 aa).

The 'HIGH' region motif lies at 10-20 (PSPTGDPHVGT). Residues Cys-107, Cys-109, Cys-134, and His-136 each contribute to the Zn(2+) site. The 'KMSKS' region motif lies at 251 to 255 (KLSKR). Lys-254 is a binding site for ATP.

This sequence belongs to the class-I aminoacyl-tRNA synthetase family. Glutamate--tRNA ligase type 1 subfamily. In terms of assembly, monomer. Requires Zn(2+) as cofactor.

Its subcellular location is the cytoplasm. It catalyses the reaction tRNA(Glu) + L-glutamate + ATP = L-glutamyl-tRNA(Glu) + AMP + diphosphate. Its function is as follows. Catalyzes the attachment of glutamate to tRNA(Glu) in a two-step reaction: glutamate is first activated by ATP to form Glu-AMP and then transferred to the acceptor end of tRNA(Glu). The protein is Glutamate--tRNA ligase of Stutzerimonas stutzeri (strain A1501) (Pseudomonas stutzeri).